Here is a 358-residue protein sequence, read N- to C-terminus: Src kinase-associated phosphoprotein 2 (358 aa).

Ser6 and Ser9 each carry phosphoserine. Residues 60–108 form a disordered region; the sequence is PQEFQDKGDAEEGDEYDDPFAGPPDTISLASERYDKDDDGPSDGNQFPP. Position 75 is a phosphotyrosine (Tyr75). Phosphoserine is present on residues Ser87 and Ser90. The region spanning 116–219 is the PH domain; it reads FVIKAGYLEK…WVQQLKFILQ (104 aa). Phosphotyrosine is present on residues Tyr151 and Tyr197. Position 223 is a phosphoserine (Ser223). The tract at residues 227–293 is disordered; it reads PEDEDEKGDL…DSVQHPSGDK (67 aa). Positions 243–253 are enriched in low complexity; that stretch reads PVPVSSPQRSQ. Positions 255–270 are enriched in acidic residues; the sequence is IDDEIYEELPEEEEDT. Tyr260 is subject to Phosphotyrosine. Phosphoserine is present on residues Ser272, Ser282, and Ser285. Residues 274–293 are compositionally biased toward basic and acidic residues; the sequence is KMDEQGKGSRDSVQHPSGDK. In terms of domain architecture, SH3 spans 296–357; the sequence is DYANFYQGLW…PKAYLMEMYD (62 aa).

This sequence belongs to the SKAP family. As to quaternary structure, interacts with FYB1, which is required for SKAP2 protein stability. Interacts with PTPNS1. Part of a complex consisting of SKAP2, FYB1 and PTPNS1. Part of a complex consisting of SKAP2, FYB1 and LILRB3. Interacts with LAT, GRB2, PTK2B, and PRAM1. May interact with actin. May interact with FYN, HCK and LYN. Interacts with FASLG.

Its subcellular location is the cytoplasm. Its function is as follows. May be involved in B-cell and macrophage adhesion processes. In B-cells, may act by coupling the B-cell receptor (BCR) to integrin activation. May play a role in src signaling pathway. This chain is Src kinase-associated phosphoprotein 2 (Skap2), found in Rattus norvegicus (Rat).